A 152-amino-acid chain; its full sequence is Calcium-binding protein SPEC 1A (152 aa).

EF-hand domains follow at residues 10-45 (EEVT…TGKS), 46-81 (YTDK…QMVK), 84-119 (WKEE…SKPP), and 120-152 (MKRK…IKSC). Ca(2+) is bound by residues D23, D25, S27, S29, E34, D59, D61, S63, T65, E70, D97, D99, N101, S103, E108, D133, N135, D137, K139, and E144. Positions 95-121 (DMDKDGNGSLSPQELREALSASKPPMK) are disordered.

Found in cell lineages giving rise to the aboral ectoderm, a squamous epithelium covering the surface of the late stage embryo and larva.

In terms of biological role, calcium-binding protein involved in larval development and metamorphosis. Likely to function as calcium buffers mediating the transport of calcium from the sea water to the blastocoel where calcium is required for skeleton formation. This is Calcium-binding protein SPEC 1A (SPEC1) from Strongylocentrotus purpuratus (Purple sea urchin).